Reading from the N-terminus, the 2208-residue chain is RNA-directed RNA polymerase L (2208 aa).

The segment at 26-284 (KEALLSQVEV…SHAGTTVPEC (259 aa)) is endonuclease. 3 residues coordinate Mn(2+): Glu51, Asp89, and Glu102. Lys115 is a catalytic residue. The RdRp catalytic domain maps to 1172 to 1370 (CDMKMAVNNG…FLSSKLNKFV (199 aa)). Asp1330 lines the Mg(2+) pocket.

It belongs to the Bunyavirales RNA polymerase family. In terms of assembly, homomultimer; the oligomeric structure is essential for the polymerase activity. Interacts with nucleoprotein N. Interacts with protein Z; this interaction inhibits viral transcription and replication, Z partially blocks the product exit tunnel for the releasing nascent RNA product. It depends on Mn(2+) as a cofactor. Mg(2+) is required as a cofactor.

It is found in the virion. It localises to the host cytoplasm. It catalyses the reaction RNA(n) + a ribonucleoside 5'-triphosphate = RNA(n+1) + diphosphate. In terms of biological role, RNA-dependent RNA polymerase, which is responsible for the replication and transcription of the viral RNA genome using antigenomic RNA as an intermediate. During transcription, synthesizes subgenomic RNAs and assures their capping by a cap-snatching mechanism, which involves the endonuclease activity cleaving the host capped pre-mRNAs. These short capped RNAs are then used as primers for viral transcription. The 3'-end of subgenomic mRNAs molecules are heterogeneous and not polyadenylated. The replicase function is to direct synthesis of antigenomic and genomic RNA which are encapsidated and non capped. As a consequence of the use of the same enzyme for both transcription and replication, these mechanisms need to be well coordinated. These processes may be regulated by proteins N and Z in a dose-dependent manner. Z protein inhibits the viral polymerase L und thus the viral transcription and RNA synthesis. The sequence is that of RNA-directed RNA polymerase L from Hylaeamys megacephalus (Large-headed rice rat).